The primary structure comprises 105 residues: Flagellar transcriptional regulator FlhD (105 aa).

It belongs to the FlhD family. Homodimer; disulfide-linked. Forms a heterohexamer composed of two FlhC and four FlhD subunits. Each FlhC binds a FlhD dimer, forming a heterotrimer, and a hexamer assembles by dimerization of two heterotrimers.

The protein localises to the cytoplasm. Functions in complex with FlhC as a master transcriptional regulator that regulates transcription of several flagellar and non-flagellar operons by binding to their promoter region. Activates expression of class 2 flagellar genes, including fliA, which is a flagellum-specific sigma factor that turns on the class 3 genes. Also regulates genes whose products function in a variety of physiological pathways. The sequence is that of Flagellar transcriptional regulator FlhD from Nitrosomonas eutropha (strain DSM 101675 / C91 / Nm57).